A 647-amino-acid polypeptide reads, in one-letter code: Protein cueball (647 aa).

The N-terminal stretch at M1–A22 is a signal peptide. Residues I23–N534 lie on the Extracellular side of the membrane. N80 and N106 each carry an N-linked (GlcNAc...) asparagine glycan. 3 LDL-receptor class B repeats span residues R119–R166, R167–S211, and D212–A257. N-linked (GlcNAc...) asparagine glycosylation occurs at N175. N-linked (GlcNAc...) asparagine glycosylation occurs at N316. EGF-like domains are found at residues D365–E401 and E436–E473. 5 cysteine pairs are disulfide-bonded: C376–C389, C391–C400, C440–C450, C444–C461, and C463–C472. N475 is a glycosylation site (N-linked (GlcNAc...) asparagine). Residues V535 to H555 form a helical membrane-spanning segment. The Cytoplasmic segment spans residues G556–Y647.

This sequence belongs to the cueball family.

Its subcellular location is the cell membrane. Has a role in spermatogenesis and oogenesis. The polypeptide is Protein cueball (Drosophila pseudoobscura pseudoobscura (Fruit fly)).